The following is a 202-amino-acid chain: MTYFLGLTGGIATGKTTVSQMLAQQGIPIIDGDQVAHQVLANNQSVQAQIQATFGKQLVQDGQVDRAALGKLVFGNQAALAQLNAITAPVIRETIMTEMVQAKAHQVPLVVLDLPLLYEQHYETVCDGVLVVYLPVEKQLARLMARNQLSREDALKRINSQASLAEKRDRADFVIDNQGSLDQLKAQLKTVLEGVCHKSGMS.

The DPCK domain maps to 4–202 (FLGLTGGIAT…EGVCHKSGMS (199 aa)). 12-17 (ATGKTT) lines the ATP pocket.

This sequence belongs to the CoaE family.

It localises to the cytoplasm. It catalyses the reaction 3'-dephospho-CoA + ATP = ADP + CoA + H(+). It participates in cofactor biosynthesis; coenzyme A biosynthesis; CoA from (R)-pantothenate: step 5/5. Functionally, catalyzes the phosphorylation of the 3'-hydroxyl group of dephosphocoenzyme A to form coenzyme A. This Latilactobacillus sakei subsp. sakei (strain 23K) (Lactobacillus sakei subsp. sakei) protein is Dephospho-CoA kinase.